The primary structure comprises 1393 residues: MEDKNNIELQEKAPDNYNNNNNNNNNNNNNNNNNNNNNNNNNNNNNNDINNNDDDNNKIIYQNPTPASSSHIDSIEIDINYDLSNHIKQRVTQNKTGMFVSANNISYYIPKSIKKGESEELSKLYLLNNISFTMKPGRMILLMGIPGAGKSLLLKVLGNRLGKGKIEGELKFNNHEVDETTHQRDTIFVSQDDRHIALLTVRETLEFSAKCNMGENVSQEEQSERVDLVLDQLGLSHTSNTIIGNQFFRGISGGQKRRVTIANEFTKRSPNLILMDEPSTGLDSATSYNVISKVKTIAKEAKASVMVSLLQPSVELTNLFDDILILGEGGNLIYFGELNNLLPYFSSIGLAPLPNQPLAEFMQEVSVEPSKYMITDKIELSSKDGGDDESKSLLLGGADSGNVEKMDLVKLFKESELNQKTIQSMQQLIPSDIKVSDHLIKKLETGDNGKSSVRYELKHLLARHIKVMKIMKMQYAVRFFQAIFMGCVIGSLFVKMGFTQADARNRFGLVYFAMVLHIWTTIGSVEEFFTLRGIFDDQKDSKYYRNFPYFLSLVITKIPISLIEAILFSSCCYWIAGFQARVDNFIVFILGMALTNLIAQGIFQVTSAFTSAQLLASLICPAIVVLFMIMSGYMISRLQIPGWWIWLNALSPLRYVIDMVSSNELYGLEFHCSPMEKIPPSNYPLLNVSYADGGYQGNQICQYSTGSDFLNQFGFSDNSYMRWVDIVIILGFVCTFFFIFFLGVKYIRFENKKPPRQIKLKKKKEKKDKKDKEVKHKWNGCYMTFQNLNYVVPSVKDNKETGKKEKVTLELLKDVNGFIVPGMCALMGPSGAGKSTLMDVLAKRKNVGTITGDIRINGQLVKDMNITRFTGYVEQQDILSANLTVREAIEFSANCRLPSSYLQKDRVKLIDEILSVLSLTKMQNTTIGPNPTLGISLANRKKVSIGIELASDPHLIFLDEPTSGLDSSAALKVMNCVKKIAESGRTVVCTIHQPSQEIFEKFDQLLLLDKGKVIYFGDTGDNSSTVIQHFTSAGYQYEHGRNPADFILEIAEHPPSTGQSASDYFKSSIHYSNSIQRLESKTIVPEGVDVPKYKGKYSAPATAQLHSLVKRGWLNHVRRPQTILLRFLRSFIPAIVIGTLFLRLDNDQTGARNRIALVFLGFLFGGMASIGKVPTIVEDRSVYYRESSAGTYPAHLYILASVITDLPMMVLTAFSYWIPMFFLTGLTLGDHGWKFFFSLSVYLLVIMCYDSLATLFALTLPTIPIAILVSGVGLNFLGLFGGFFIPVNNIPRGWIWMHYLVFSKYGLETLSITELKGEPFFCEEDQYSIIPIAGTNFTKKYCAIQSGDTMLLQYGMNDAYDRQFYNLIILGGYFCAYTFLGYLALRFINHMKR.

Residues 1 to 14 (MEDKNNIELQEKAP) show a composition bias toward basic and acidic residues. Positions 1–68 (MEDKNNIELQ…IIYQNPTPAS (68 aa)) are disordered. Over residues 15 to 50 (DNYNNNNNNNNNNNNNNNNNNNNNNNNNNNNNNDIN) the composition is skewed to low complexity. Residues 100–353 (VSANNISYYI…YFSSIGLAPL (254 aa)) enclose the ABC transporter 1 domain. Residue 144 to 151 (GIPGAGKS) coordinates ATP. The 226-residue stretch at 473–698 (MQYAVRFFQA…SYADGGYQGN (226 aa)) folds into the ABC transmembrane type-2 1 domain. The next 7 helical transmembrane spans lie at 479–499 (FFQAIFMGCVIGSLFVKMGFT), 509–529 (LVYFAMVLHIWTTIGSVEEFF), 558–578 (IPISLIEAILFSSCCYWIAGF), 585–605 (FIVFILGMALTNLIAQGIFQV), 615–635 (LASLICPAIVVLFMIMSGYMI), 640–660 (IPGWWIWLNALSPLRYVIDMV), and 724–744 (VDIVIILGFVCTFFFIFFLGV). The region spanning 783 to 1035 (MTFQNLNYVV…VIQHFTSAGY (253 aa)) is the ABC transporter 2 domain. 828-835 (GPSGAGKS) contributes to the ATP binding site. Residues 1121 to 1388 (QTILLRFLRS…FLGYLALRFI (268 aa)) enclose the ABC transmembrane type-2 2 domain. Helical transmembrane passes span 1122–1142 (TILLRFLRSFIPAIVIGTLFL), 1157–1177 (LVFLGFLFGGMASIGKVPTIV), 1206–1226 (LPMMVLTAFSYWIPMFFLTGL), 1235–1255 (FFFSLSVYLLVIMCYDSLATL), 1265–1285 (IAILVSGVGLNFLGLFGGFFI), and 1364–1384 (FYNLIILGGYFCAYTFLGYLA).

The protein belongs to the ABC transporter superfamily. ABCG family. PDR (TC 3.A.1.205) subfamily.

The protein resides in the membrane. This Dictyostelium discoideum (Social amoeba) protein is ABC transporter G family member 3 (abcG3).